The sequence spans 338 residues: 1-aminocyclopropane-1-carboxylate deaminase (338 aa).

An N6-(pyridoxal phosphate)lysine modification is found at Lys51. Residue Ser78 is the Nucleophile of the active site.

This sequence belongs to the ACC deaminase/D-cysteine desulfhydrase family. In terms of assembly, homotrimer. It depends on pyridoxal 5'-phosphate as a cofactor.

It carries out the reaction 1-aminocyclopropane-1-carboxylate + H2O = 2-oxobutanoate + NH4(+). Its function is as follows. Catalyzes a cyclopropane ring-opening reaction, the irreversible conversion of 1-aminocyclopropane-1-carboxylate (ACC) to ammonia and alpha-ketobutyrate. Allows growth on ACC as a nitrogen source. The sequence is that of 1-aminocyclopropane-1-carboxylate deaminase from Variovorax paradoxus (strain S110).